Here is a 69-residue protein sequence, read N- to C-terminus: UPF0150 protein AF_1072 (69 aa).

It belongs to the UPF0150 family.

This Archaeoglobus fulgidus (strain ATCC 49558 / DSM 4304 / JCM 9628 / NBRC 100126 / VC-16) protein is UPF0150 protein AF_1072.